The sequence spans 33 residues: Unknown 31.6 kDa protein from 2D-PAGE (33 aa).

The chain is Unknown 31.6 kDa protein from 2D-PAGE from Onion yellows phytoplasma.